A 131-amino-acid chain; its full sequence is Histone H2B.1 (131 aa).

Residues Met1–Pro19 show a composition bias toward basic and acidic residues. The disordered stretch occupies residues Met1–Lys38. 2 positions are modified to N6-acetyllysine; alternate: Lys7 and Lys8. Residues Lys7 and Lys8 each participate in a glycyl lysine isopeptide (Lys-Gly) (interchain with G-Cter in SUMO); alternate cross-link. At Ser11 the chain carries Phosphoserine. An N6-acetyllysine modification is found at Lys12. An N6-acetyllysine; alternate mark is found at Lys17, Lys18, Lys22, and Lys23. Glycyl lysine isopeptide (Lys-Gly) (interchain with G-Cter in SUMO); alternate cross-links involve residues Lys17 and Lys18. An N6-butyryllysine; alternate modification is found at Lys22. Lys23 carries the post-translational modification N6-methyllysine; alternate. Position 35 is an N6-succinyllysine (Lys35). Lys38 is modified (N6,N6-dimethyllysine). Lys47 carries the post-translational modification N6-succinyllysine. Residue Lys124 forms a Glycyl lysine isopeptide (Lys-Gly) (interchain with G-Cter in ubiquitin) linkage.

It belongs to the histone H2B family. In terms of assembly, the nucleosome is a histone octamer containing two molecules each of H2A, H2B, H3 and H4 assembled in one H3-H4 heterotetramer and two H2A-H2B heterodimers. The octamer wraps approximately 147 bp of DNA. Monoubiquitinated by the RAD6/UBC2-BRE1 complex to form H2BK123ub1. H2BK123ub1 gives a specific tag for epigenetic transcriptional activation and is also prerequisite for H3K4me and H3K79me formation. H2BK123ub1 also modulates the formation of double-strand breaks during meiosis and is a prerequisite for DNA-damage checkpoint activation. Deubiquitination is performed by UBP8 in presence of SGF11. In terms of processing, phosphorylated by STE20 to form H2BS10ph during progression through meiotic prophase. May be correlated with chromosome condensation. H2BS10ph is also formed after H(2)O(2) treatment, and is a step leading to apoptosis. Post-translationally, acetylated by GCN5, a component of the SAGA complex, to form H2BK11ac and H2BK16ac. H2BK16ac can also be formed by ESA1, a component of the NuA4 histone acetyltransferase (HAT) complex. Acetylation of N-terminal lysines and particularly formation of H2BK11acK16ac has a positive effect on transcription. Sumoylation to form H2BK6su or H2BK7su, and probably also H2BK16su or H2BK17su, occurs preferentially near the telomeres and represses gene transcription.

It is found in the nucleus. It localises to the chromosome. Its function is as follows. Core component of nucleosome. Nucleosomes wrap and compact DNA into chromatin, limiting DNA accessibility to the cellular machineries which require DNA as a template. Histones thereby play a central role in transcription regulation, DNA repair, DNA replication and chromosomal stability. DNA accessibility is regulated via a complex set of post-translational modifications of histones, also called histone code, and nucleosome remodeling. This chain is Histone H2B.1 (HTB1), found in Saccharomyces cerevisiae (strain ATCC 204508 / S288c) (Baker's yeast).